Consider the following 293-residue polypeptide: Pyridoxal 5'-phosphate synthase subunit PdxS (293 aa).

D23 contacts D-ribose 5-phosphate. The active-site Schiff-base intermediate with D-ribose 5-phosphate is the K80. D-ribose 5-phosphate is bound at residue G152. Residue R164 participates in D-glyceraldehyde 3-phosphate binding. Residues G213 and 234-235 (GS) each bind D-ribose 5-phosphate.

The protein belongs to the PdxS/SNZ family. As to quaternary structure, in the presence of PdxT, forms a dodecamer of heterodimers.

The enzyme catalyses aldehydo-D-ribose 5-phosphate + D-glyceraldehyde 3-phosphate + L-glutamine = pyridoxal 5'-phosphate + L-glutamate + phosphate + 3 H2O + H(+). It functions in the pathway cofactor biosynthesis; pyridoxal 5'-phosphate biosynthesis. Catalyzes the formation of pyridoxal 5'-phosphate from ribose 5-phosphate (RBP), glyceraldehyde 3-phosphate (G3P) and ammonia. The ammonia is provided by the PdxT subunit. Can also use ribulose 5-phosphate and dihydroxyacetone phosphate as substrates, resulting from enzyme-catalyzed isomerization of RBP and G3P, respectively. This Thermus thermophilus (strain ATCC 27634 / DSM 579 / HB8) protein is Pyridoxal 5'-phosphate synthase subunit PdxS.